The chain runs to 178 residues: ATP synthase subunit delta (178 aa).

The protein belongs to the ATPase delta chain family. As to quaternary structure, F-type ATPases have 2 components, F(1) - the catalytic core - and F(0) - the membrane proton channel. F(1) has five subunits: alpha(3), beta(3), gamma(1), delta(1), epsilon(1). F(0) has three main subunits: a(1), b(2) and c(10-14). The alpha and beta chains form an alternating ring which encloses part of the gamma chain. F(1) is attached to F(0) by a central stalk formed by the gamma and epsilon chains, while a peripheral stalk is formed by the delta and b chains.

The protein resides in the cell inner membrane. Functionally, f(1)F(0) ATP synthase produces ATP from ADP in the presence of a proton or sodium gradient. F-type ATPases consist of two structural domains, F(1) containing the extramembraneous catalytic core and F(0) containing the membrane proton channel, linked together by a central stalk and a peripheral stalk. During catalysis, ATP synthesis in the catalytic domain of F(1) is coupled via a rotary mechanism of the central stalk subunits to proton translocation. Its function is as follows. This protein is part of the stalk that links CF(0) to CF(1). It either transmits conformational changes from CF(0) to CF(1) or is implicated in proton conduction. This Pseudomonas fluorescens (strain Pf0-1) protein is ATP synthase subunit delta.